The chain runs to 389 residues: Phosphoglycerate kinase (389 aa).

Residues 19–21 (DYN), arginine 34, 57–60 (HLGR), arginine 117, and arginine 150 contribute to the substrate site. Residues lysine 200, glycine 288, glutamate 319, and 347–350 (GGDS) each bind ATP.

It belongs to the phosphoglycerate kinase family. In terms of assembly, monomer.

The protein localises to the cytoplasm. It carries out the reaction (2R)-3-phosphoglycerate + ATP = (2R)-3-phospho-glyceroyl phosphate + ADP. Its pathway is carbohydrate degradation; glycolysis; pyruvate from D-glyceraldehyde 3-phosphate: step 2/5. This Deinococcus geothermalis (strain DSM 11300 / CIP 105573 / AG-3a) protein is Phosphoglycerate kinase.